Reading from the N-terminus, the 85-residue chain is Neurotoxin 60.35 (85 aa).

An N-terminal signal peptide occupies residues 1–23; it reads MKFCVAVSLLIIASMAGVISVSG. The region spanning 24–85 is the LCN-type CS-alpha/beta domain; it reads YDVYPRDYAG…NFLSVIWKQC (62 aa). Disulfide bonds link Cys38-Cys60, Cys46-Cys65, and Cys50-Cys67.

Belongs to the long (3 C-C) scorpion toxin superfamily. As to expression, expressed by the venom gland.

Its subcellular location is the secreted. In Lychas mucronatus (Chinese swimming scorpion), this protein is Neurotoxin 60.35.